The following is a 226-amino-acid chain: Putative pyridoxamine 5'-phosphate oxidase (226 aa).

16 to 19 (LNSH) contributes to the pyridoxal 5'-phosphate binding site. 72 to 75 (RMVL) lines the FMN pocket. Lysine 77 contacts pyridoxal 5'-phosphate. Residues 87–88 (YT), 93–94 (RK), and glutamine 116 contribute to the FMN site. The pyridoxal 5'-phosphate site is built by tyrosine 134, arginine 138, and serine 142. Residues 151–152 (QS) and tryptophan 199 contribute to the FMN site. 205–207 (RLH) is a binding site for pyridoxal 5'-phosphate. Arginine 209 lines the FMN pocket.

This sequence belongs to the pyridoxamine 5'-phosphate oxidase family. In terms of assembly, homodimer. Requires FMN as cofactor.

The enzyme catalyses pyridoxamine 5'-phosphate + O2 + H2O = pyridoxal 5'-phosphate + H2O2 + NH4(+). It carries out the reaction pyridoxine 5'-phosphate + O2 = pyridoxal 5'-phosphate + H2O2. It participates in cofactor metabolism; pyridoxal 5'-phosphate salvage; pyridoxal 5'-phosphate from pyridoxamine 5'-phosphate: step 1/1. It functions in the pathway cofactor metabolism; pyridoxal 5'-phosphate salvage; pyridoxal 5'-phosphate from pyridoxine 5'-phosphate: step 1/1. In terms of biological role, catalyzes the oxidation of either pyridoxine 5'-phosphate (PNP) or pyridoxamine 5'-phosphate (PMP) into pyridoxal 5'-phosphate (PLP). The sequence is that of Putative pyridoxamine 5'-phosphate oxidase from Caenorhabditis elegans.